A 191-amino-acid chain; its full sequence is Insulin-like peptide INSL6 (191 aa).

A signal peptide spans 1–22; it reads MKQLCCSCLLWLGLLLTPFSRE. Cystine bridges form between C33-C172, C45-C185, and C171-C176. Positions 53–161 are cleaved as a propeptide — connecting peptide; that stretch reads FEMEEQSPMT…RSLFWGNHSQ (109 aa).

This sequence belongs to the insulin family.

Its subcellular location is the secreted. In terms of biological role, may have a role in sperm development and fertilization. The polypeptide is Insulin-like peptide INSL6 (Insl6) (Mus musculus (Mouse)).